The primary structure comprises 161 residues: Small ribosomal subunit protein uS19 (161 aa).

The segment covering 1-19 (MARQKKYSGKGGARKKNKQ) has biased composition (basic residues). Residues 1–26 (MARQKKYSGKGGARKKNKQKQNVAPR) form a disordered region.

Belongs to the universal ribosomal protein uS19 family.

Its function is as follows. Protein S19 forms a complex with S13 that binds strongly to the 16S ribosomal RNA. This Methanococcus maripaludis (strain C5 / ATCC BAA-1333) protein is Small ribosomal subunit protein uS19.